Here is a 420-residue protein sequence, read N- to C-terminus: Serine hydroxymethyltransferase (420 aa).

Residues L121 and 125–127 contribute to the (6S)-5,6,7,8-tetrahydrofolate site; that span reads GHL. At K229 the chain carries N6-(pyridoxal phosphate)lysine.

This sequence belongs to the SHMT family. Homodimer. The cofactor is pyridoxal 5'-phosphate.

It is found in the cytoplasm. The enzyme catalyses (6R)-5,10-methylene-5,6,7,8-tetrahydrofolate + glycine + H2O = (6S)-5,6,7,8-tetrahydrofolate + L-serine. It participates in one-carbon metabolism; tetrahydrofolate interconversion. Its pathway is amino-acid biosynthesis; glycine biosynthesis; glycine from L-serine: step 1/1. Its function is as follows. Catalyzes the reversible interconversion of serine and glycine with tetrahydrofolate (THF) serving as the one-carbon carrier. This reaction serves as the major source of one-carbon groups required for the biosynthesis of purines, thymidylate, methionine, and other important biomolecules. Also exhibits THF-independent aldolase activity toward beta-hydroxyamino acids, producing glycine and aldehydes, via a retro-aldol mechanism. This is Serine hydroxymethyltransferase from Aggregatibacter actinomycetemcomitans (Actinobacillus actinomycetemcomitans).